The following is a 433-amino-acid chain: Cyclin-dependent kinase 15 (433 aa).

A disordered region spans residues 46–83 (ASSSTASFHPRGLEAASAQKLKSKRPRSNSDSFQEENL). The Protein kinase domain occupies 52-336 (SFHPRGLEAA…SKLPNYNPEW (285 aa)). ATP contacts are provided by residues 58-66 (LEAASAQKL) and Glu81. Thr173 acts as the Proton acceptor in catalysis.

This sequence belongs to the protein kinase superfamily. CMGC Ser/Thr protein kinase family. CDC2/CDKX subfamily. It depends on Mg(2+) as a cofactor.

It catalyses the reaction L-seryl-[protein] + ATP = O-phospho-L-seryl-[protein] + ADP + H(+). The enzyme catalyses L-threonyl-[protein] + ATP = O-phospho-L-threonyl-[protein] + ADP + H(+). Serine/threonine-protein kinase that acts like an antiapoptotic protein that counters TRAIL/TNFSF10-induced apoptosis by inducing phosphorylation of BIRC5 at 'Thr-34'. The protein is Cyclin-dependent kinase 15 (Cdk15) of Mus musculus (Mouse).